Here is a 398-residue protein sequence, read N- to C-terminus: Acetate kinase (398 aa).

Asn7 is a binding site for Mg(2+). Residue Lys14 participates in ATP binding. Arg91 contributes to the substrate binding site. Asp148 functions as the Proton donor/acceptor in the catalytic mechanism. Residues 208 to 212 (HLGNG), 283 to 285 (DFR), and 331 to 335 (GIGEH) contribute to the ATP site. Residue Glu386 participates in Mg(2+) binding.

It belongs to the acetokinase family. As to quaternary structure, homodimer. Mg(2+) is required as a cofactor. The cofactor is Mn(2+).

It localises to the cytoplasm. The catalysed reaction is acetate + ATP = acetyl phosphate + ADP. It functions in the pathway metabolic intermediate biosynthesis; acetyl-CoA biosynthesis; acetyl-CoA from acetate: step 1/2. In terms of biological role, catalyzes the formation of acetyl phosphate from acetate and ATP. Can also catalyze the reverse reaction. This chain is Acetate kinase, found in Clostridium botulinum (strain Eklund 17B / Type B).